The primary structure comprises 986 residues: Ephrin type-A receptor 4 (986 aa).

A signal peptide spans 1–19 (MAGIFYFILFSFLFGICDA). The Extracellular portion of the chain corresponds to 20–547 (VTGSRVYPAN…RIIGDGANST (528 aa)). In terms of domain architecture, Eph LBD spans 30–209 (EVTLLDSRSV…FYKKCPLTVR (180 aa)). N235, N340, and N408 each carry an N-linked (GlcNAc...) asparagine glycan. Fibronectin type-III domains follow at residues 328–439 (PPSA…TNQA) and 440–537 (APSS…TVPS). A helical membrane pass occupies residues 548 to 569 (VLLVSVSGSVVLVVILIAAFVI). Residues 570–986 (SRRRSKYSKA…QQMHGRMVPV (417 aa)) are Cytoplasmic-facing. A phosphotyrosine; by autocatalysis mark is found at Y596 and Y602. The 262-residue stretch at 621–882 (IKIEKVIGVG…QIVNMLDKLI (262 aa)) folds into the Protein kinase domain. Residues 627–635 (IGVGEFGEV) and K653 each bind ATP. D746 acts as the Proton acceptor in catalysis. 2 positions are modified to phosphotyrosine; by autocatalysis: Y779 and Y928. An SAM domain is found at 911–975 (SAVVSVGDWL…LSSVQAMRTQ (65 aa)). The PDZ-binding signature appears at 984-986 (VPV).

This sequence belongs to the protein kinase superfamily. Tyr protein kinase family. Ephrin receptor subfamily. Heterotetramer upon binding of the ligand. The heterotetramer is composed of an ephrin dimer and a receptor dimer. Oligomerization is probably required to induce biological responses. Interacts (phosphorylated at position Tyr-602) with FYN. Interacts (via PDZ motif) with SIPA1L1 (via PDZ domain); controls neuronal morphology through regulation of the RAP1 (RAP1A or RAP1B) and RAP2 (RAP2A, RAP2B or RAP2C) GTPases. Interacts with CDK5, CDK5R1 and NGEF; upon activation by EFNA1 induces NGEF phosphorylation by the kinase CDK5. Interacts with CHN1; effector of EPHA4 in axon guidance linking EPHA4 activation to RAC1 regulation. Forms a ternary complex composed of ADAM10, CADH1 and EPHA4; within the complex, CADH1 is cleaved by ADAM10 which disrupts adherens junctions. Expressed in inner and outer pillar cells of the organ of Corti (at protein level). Highest expression in the adult brain and retina and also detectable in kidney, lung, skeletal muscle and thymus. Not detected in heart and liver. Expressed in myogenic progenitor cells.

It localises to the cell membrane. The protein localises to the cell projection. It is found in the axon. The protein resides in the dendrite. Its subcellular location is the postsynaptic density membrane. It localises to the early endosome. The protein localises to the cell junction. It is found in the adherens junction. It carries out the reaction L-tyrosyl-[protein] + ATP = O-phospho-L-tyrosyl-[protein] + ADP + H(+). Its function is as follows. Receptor tyrosine kinase which binds membrane-bound ephrin family ligands residing on adjacent cells, leading to contact-dependent bidirectional signaling into neighboring cells. The signaling pathway downstream of the receptor is referred to as forward signaling while the signaling pathway downstream of the ephrin ligand is referred to as reverse signaling. Highly promiscuous, it has the unique property among Eph receptors to bind and to be physiologically activated by both GPI-anchored ephrin-A and transmembrane ephrin-B ligands including EFNA1 and EFNB3. Upon activation by ephrin ligands, modulates cell morphology and integrin-dependent cell adhesion through regulation of the Rac, Rap and Rho GTPases activity. Plays an important role in the development of the nervous system controlling different steps of axonal guidance including the establishment of the corticospinal projections. May also control the segregation of motor and sensory axons during neuromuscular circuit developmen. In addition to its role in axonal guidance plays a role in synaptic plasticity. Activated by EFNA1 phosphorylates CDK5 at 'Tyr-15' which in turn phosphorylates NGEF regulating RHOA and dendritic spine morphogenesis. In the nervous system, also plays a role in repair after injury preventing axonal regeneration and in angiogenesis playing a role in central nervous system vascular formation. Additionally, its promiscuity makes it available to participate in a variety of cell-cell signaling regulating for instance the development of the thymic epithelium. During development of the cochlear organ of Corti, regulates pillar cell separation by forming a ternary complex with ADAM10 and CADH1 which facilitates the cleavage of CADH1 by ADAM10 and disruption of adherens junctions. Phosphorylates CAPRIN1, promoting CAPRIN1-dependent formation of a membraneless compartment. This Mus musculus (Mouse) protein is Ephrin type-A receptor 4 (Epha4).